A 504-amino-acid chain; its full sequence is Protein Dok-7 (504 aa).

The region spanning Ala-4–Gly-109 is the PH domain. In terms of domain architecture, IRS-type PTB spans Arg-105–Phe-210. Disordered stretches follow at residues Phe-210–Glu-229, Ser-249–Ser-351, and Leu-411–Gly-483. Low complexity-rich tracts occupy residues Leu-263 to Ser-279 and Ser-288 to Ala-310. Positions Gly-331 to Ala-341 are enriched in polar residues.

Homodimer. Forms a heterotetramer composed of 2 DOK7 and 2 MUSK molecules which facilitates MUSK trans-autophosphorylation on tyrosine residue and activation. Interacts (via IRS-type PTB domain) with MUSK (via cytoplasmic part); requires MUSK phosphorylation. As to expression, preferentially expressed in skeletal muscle and heart. Present in thigh muscle, diaphragm and heart but not in the liver or spleen (at protein level).

It is found in the cell membrane. It localises to the synapse. Functionally, probable muscle-intrinsic activator of MUSK that plays an essential role in neuromuscular synaptogenesis. Acts in aneural activation of MUSK and subsequent acetylcholine receptor (AchR) clustering in myotubes. Induces autophosphorylation of MUSK. This chain is Protein Dok-7 (DOK7), found in Homo sapiens (Human).